We begin with the raw amino-acid sequence, 71 residues long: Pro-MCH (71 aa).

Positions 1–20 (AKMSLSSYILILTLVLFSQG) are cleaved as a signal peptide.

Belongs to the melanin-concentrating hormone family.

The protein localises to the secreted. The chain is Pro-MCH (PMCH) from Carlito syrichta (Philippine tarsier).